The following is a 546-amino-acid chain: MAAKDVKFDTDARDRMLRGVNILADAVKVTLGPKGRNVVIDKSFGAPRITKDGVSVAKEIELSDKFENMGAQMVKEVASRTNDEAGDGTTTATVLAQAIIKEGLKAVAAGMNPMDLKRGIDLATAKVVESIKAASRPVNDQHEVAQVGTISANGEAQIGRFIADAMQKVGNEGVITVEENKGLETEVEVVEGMQFDRGYLSPYFVTNADKMTAELEDVFILLHEKKLSSLQPMVPLLESVIQAQRPLLIVAEDVEGEALATLVVNKLRGGLKIAAVKAPGFGDRRKAMLQDIAILTGGQVISEDLGMKLENVTIDMLGRAKKVSINKDNTTIVDGAGEKAEIEARVSQIRTQIEETTSDYDREKLQERVAKLAGGVAVIRVGGMTEVEVKERKDRVDDALNATRAAVQEGIVVGGGVALIQAGKVLDGLTGENPDQNAGITIVRRALEAPLRQIAQNAGVDGSVVAGKVRESDDKAFGFNAQTEEYGDMFKFGVIDPAKVVRTALEDAASVASLLITTEAMIADKPEPKSAPAGGMGGMGGMDGMM.

ATP contacts are provided by residues 30–33 (TLGP), Lys-51, 87–91 (DGTTT), Gly-415, and Asp-496. The disordered stretch occupies residues 526–546 (PEPKSAPAGGMGGMGGMDGMM). Over residues 534 to 546 (GGMGGMGGMDGMM) the composition is skewed to gly residues.

The protein belongs to the chaperonin (HSP60) family. Forms a cylinder of 14 subunits composed of two heptameric rings stacked back-to-back. Interacts with the co-chaperonin GroES.

It localises to the cytoplasm. It carries out the reaction ATP + H2O + a folded polypeptide = ADP + phosphate + an unfolded polypeptide.. Functionally, together with its co-chaperonin GroES, plays an essential role in assisting protein folding. The GroEL-GroES system forms a nano-cage that allows encapsulation of the non-native substrate proteins and provides a physical environment optimized to promote and accelerate protein folding. This Rhodopseudomonas palustris protein is Chaperonin GroEL.